The sequence spans 351 residues: Methionine import ATP-binding protein MetN (351 aa).

The region spanning 2–241 (IELRNVTKTY…PKTEIAKKFT (240 aa)) is the ABC transporter domain. Position 38-45 (38-45 (GKSGAGKS)) interacts with ATP.

Belongs to the ABC transporter superfamily. Methionine importer (TC 3.A.1.24) family. In terms of assembly, the complex is composed of two ATP-binding proteins (MetN), two transmembrane proteins (MetI) and a solute-binding protein (MetQ).

It is found in the cell inner membrane. The enzyme catalyses L-methionine(out) + ATP + H2O = L-methionine(in) + ADP + phosphate + H(+). It carries out the reaction D-methionine(out) + ATP + H2O = D-methionine(in) + ADP + phosphate + H(+). In terms of biological role, part of the ABC transporter complex MetNIQ involved in methionine import. Responsible for energy coupling to the transport system. The chain is Methionine import ATP-binding protein MetN from Coxiella burnetii (strain RSA 493 / Nine Mile phase I).